Here is a 302-residue protein sequence, read N- to C-terminus: Aspartate carbamoyltransferase catalytic subunit (302 aa).

Residues Arg-53 and Thr-54 each contribute to the carbamoyl phosphate site. Residue Lys-82 participates in L-aspartate binding. The carbamoyl phosphate site is built by Arg-103, His-131, and Gln-134. Residues Arg-164 and Arg-223 each contribute to the L-aspartate site. Positions 260 and 261 each coordinate carbamoyl phosphate.

It belongs to the aspartate/ornithine carbamoyltransferase superfamily. ATCase family. In terms of assembly, heterooligomer of catalytic and regulatory chains.

It catalyses the reaction carbamoyl phosphate + L-aspartate = N-carbamoyl-L-aspartate + phosphate + H(+). Its pathway is pyrimidine metabolism; UMP biosynthesis via de novo pathway; (S)-dihydroorotate from bicarbonate: step 2/3. Its function is as follows. Catalyzes the condensation of carbamoyl phosphate and aspartate to form carbamoyl aspartate and inorganic phosphate, the committed step in the de novo pyrimidine nucleotide biosynthesis pathway. In Methanococcus maripaludis (strain DSM 14266 / JCM 13030 / NBRC 101832 / S2 / LL), this protein is Aspartate carbamoyltransferase catalytic subunit.